Consider the following 539-residue polypeptide: Phosphoenolpyruvate carboxykinase (ATP) (539 aa).

Substrate contacts are provided by Arg-64, Tyr-206, and Lys-212. ATP is bound by residues Lys-212, His-231, and Gly-247–Thr-255. Residues Lys-212 and His-231 each contribute to the Mn(2+) site. Asp-268 is a binding site for Mn(2+). ATP-binding positions include Glu-296, Arg-332, Arg-448–Ile-449, and Thr-454. Arg-332 serves as a coordination point for substrate.

Belongs to the phosphoenolpyruvate carboxykinase (ATP) family. Monomer. Requires Mn(2+) as cofactor.

The protein localises to the cytoplasm. The catalysed reaction is oxaloacetate + ATP = phosphoenolpyruvate + ADP + CO2. The protein operates within carbohydrate biosynthesis; gluconeogenesis. Functionally, involved in the gluconeogenesis. Catalyzes the conversion of oxaloacetate (OAA) to phosphoenolpyruvate (PEP) through direct phosphoryl transfer between the nucleoside triphosphate and OAA. In Yersinia enterocolitica serotype O:8 / biotype 1B (strain NCTC 13174 / 8081), this protein is Phosphoenolpyruvate carboxykinase (ATP).